Here is a 299-residue protein sequence, read N- to C-terminus: Formamidopyrimidine-DNA glycosylase (299 aa).

The active-site Schiff-base intermediate with DNA is proline 2. Residue glutamate 3 is the Proton donor of the active site. The active-site Proton donor; for beta-elimination activity is the lysine 58. The DNA site is built by histidine 106, arginine 125, and lysine 168. The segment at arginine 259–valine 295 adopts an FPG-type zinc-finger fold. Arginine 285 functions as the Proton donor; for delta-elimination activity in the catalytic mechanism.

It belongs to the FPG family. Monomer. Zn(2+) is required as a cofactor.

It catalyses the reaction Hydrolysis of DNA containing ring-opened 7-methylguanine residues, releasing 2,6-diamino-4-hydroxy-5-(N-methyl)formamidopyrimidine.. It carries out the reaction 2'-deoxyribonucleotide-(2'-deoxyribose 5'-phosphate)-2'-deoxyribonucleotide-DNA = a 3'-end 2'-deoxyribonucleotide-(2,3-dehydro-2,3-deoxyribose 5'-phosphate)-DNA + a 5'-end 5'-phospho-2'-deoxyribonucleoside-DNA + H(+). In terms of biological role, involved in base excision repair of DNA damaged by oxidation or by mutagenic agents. Acts as a DNA glycosylase that recognizes and removes damaged bases. Has a preference for oxidized purines, such as 7,8-dihydro-8-oxoguanine (8-oxoG). Has AP (apurinic/apyrimidinic) lyase activity and introduces nicks in the DNA strand. Cleaves the DNA backbone by beta-delta elimination to generate a single-strand break at the site of the removed base with both 3'- and 5'-phosphates. The chain is Formamidopyrimidine-DNA glycosylase from Methylorubrum extorquens (strain CM4 / NCIMB 13688) (Methylobacterium extorquens).